We begin with the raw amino-acid sequence, 139 residues long: uncharacterized protein (139 aa).

An HTH marR-type domain is found at Ala-8–Gln-139. The segment at residues Ile-53 to Gln-76 is a DNA-binding region (H-T-H motif).

This is an uncharacterized protein from Bacillus subtilis (strain 168).